Consider the following 185-residue polypeptide: Elongation factor P (185 aa).

This sequence belongs to the elongation factor P family.

It is found in the cytoplasm. It participates in protein biosynthesis; polypeptide chain elongation. Functionally, involved in peptide bond synthesis. Stimulates efficient translation and peptide-bond synthesis on native or reconstituted 70S ribosomes in vitro. Probably functions indirectly by altering the affinity of the ribosome for aminoacyl-tRNA, thus increasing their reactivity as acceptors for peptidyl transferase. This is Elongation factor P from Aromatoleum aromaticum (strain DSM 19018 / LMG 30748 / EbN1) (Azoarcus sp. (strain EbN1)).